The primary structure comprises 263 residues: 2-keto-4-pentenoate hydratase 1 (263 aa).

It belongs to the hydratase/decarboxylase family. MhpD subfamily. The cofactor is a divalent metal cation.

It catalyses the reaction (S)-4-hydroxy-2-oxopentanoate = (2Z)-2-hydroxypenta-2,4-dienoate + H2O. The protein operates within aromatic compound metabolism; 3-phenylpropanoate degradation. In terms of biological role, catalyzes the conversion of 2-hydroxypentadienoic acid (enolic form of 2-oxopent-4-enoate) to 4-hydroxy-2-ketopentanoic acid. The protein is 2-keto-4-pentenoate hydratase 1 of Dechloromonas aromatica (strain RCB).